The primary structure comprises 931 residues: Protein translocase subunit SecA (931 aa).

ATP is bound by residues Gln87, 105 to 109, and Asp515; that span reads GEGKT. Cys915, Cys917, Cys926, and His927 together coordinate Zn(2+).

The protein belongs to the SecA family. Monomer and homodimer. Part of the essential Sec protein translocation apparatus which comprises SecA, SecYEG and auxiliary proteins SecDF-YajC and YidC. It depends on Zn(2+) as a cofactor.

The protein resides in the cell inner membrane. Its subcellular location is the cytoplasm. The catalysed reaction is ATP + H2O + cellular proteinSide 1 = ADP + phosphate + cellular proteinSide 2.. Its function is as follows. Part of the Sec protein translocase complex. Interacts with the SecYEG preprotein conducting channel. Has a central role in coupling the hydrolysis of ATP to the transfer of proteins into and across the cell membrane, serving both as a receptor for the preprotein-SecB complex and as an ATP-driven molecular motor driving the stepwise translocation of polypeptide chains across the membrane. This chain is Protein translocase subunit SecA, found in Burkholderia pseudomallei (strain K96243).